The sequence spans 352 residues: Selenide, water dikinase (352 aa).

Residue C23 is part of the active site. ATP-binding positions include K26 and 54 to 56 (SRD). Residue D57 coordinates Mg(2+). ATP-binding positions include D74, D97, and 145-147 (GHS). D97 serves as a coordination point for Mg(2+). Residue D233 coordinates Mg(2+).

It belongs to the selenophosphate synthase 1 family. Class I subfamily. In terms of assembly, homodimer. Mg(2+) serves as cofactor.

It catalyses the reaction hydrogenselenide + ATP + H2O = selenophosphate + AMP + phosphate + 2 H(+). Its function is as follows. Synthesizes selenophosphate from selenide and ATP. This chain is Selenide, water dikinase, found in Shewanella sp. (strain MR-7).